A 162-amino-acid polypeptide reads, in one-letter code: Sorting nexin-3 (162 aa).

The segment at 1–23 (MPREFKSFGSTEKSLLSKGHGEP) is disordered. Residues 38–161 (IEVHNPKTHI…VRFIEAEKFV (124 aa)) form the PX domain. A 1,2-diacyl-sn-glycero-3-phospho-(1D-myo-inositol-3-phosphate) is bound by residues arginine 81, serine 83, lysine 112, and arginine 127.

It belongs to the sorting nexin family. As to quaternary structure, monomer. Interacts with RBD2, YIF1, YIP1 and YIP5.

The protein resides in the cytoplasm. It localises to the golgi apparatus membrane. Its subcellular location is the prevacuolar compartment membrane. Its function is as follows. Required for retention of late Golgi membrane proteins. Component of the retrieval machinery that functions by direct interaction with the cytosolic tails of certain TGN membrane proteins during the sorting/budding process at the prevacuolar compartment. Binds phosphatidylinositol 3-phosphate (PtdIns(P3)). The polypeptide is Sorting nexin-3 (SNX3) (Saccharomyces cerevisiae (strain ATCC 204508 / S288c) (Baker's yeast)).